Reading from the N-terminus, the 129-residue chain is Small ribosomal subunit protein uS11 (129 aa).

It belongs to the universal ribosomal protein uS11 family. Part of the 30S ribosomal subunit. Interacts with proteins S7 and S18. Binds to IF-3.

Located on the platform of the 30S subunit, it bridges several disparate RNA helices of the 16S rRNA. Forms part of the Shine-Dalgarno cleft in the 70S ribosome. The protein is Small ribosomal subunit protein uS11 of Brucella abortus (strain S19).